Consider the following 154-residue polypeptide: Large ribosomal subunit protein uL13 (154 aa).

The protein belongs to the universal ribosomal protein uL13 family. As to quaternary structure, part of the 50S ribosomal subunit.

Functionally, this protein is one of the early assembly proteins of the 50S ribosomal subunit, although it is not seen to bind rRNA by itself. It is important during the early stages of 50S assembly. This Cereibacter sphaeroides (strain ATCC 17025 / ATH 2.4.3) (Rhodobacter sphaeroides) protein is Large ribosomal subunit protein uL13.